A 1816-amino-acid chain; its full sequence is Laminin subunit alpha-4 (1816 aa).

The first 24 residues, 1-24, serve as a signal peptide directing secretion; it reads MGWSTAWCSVLALWLLWCAVCSNA. An O-linked (Xyl...) (chondroitin sulfate) serine glycan is attached at Ser39. 12 disulfides stabilise this stretch: Cys82-Cys91, Cys84-Cys98, Cys101-Cys110, Cys113-Cys129, Cys132-Cys146, Cys134-Cys155, Cys157-Cys166, Cys169-Cys184, Cys187-Cys202, Cys189-Cys209, Cys212-Cys221, and Cys224-Cys238. Laminin EGF-like domains follow at residues 82–131, 132–186, and 187–240; these read CDCN…FCQP, CPCP…TCKK, and CDCS…NCAV. Asn104 carries N-linked (GlcNAc...) asparagine glycosylation. A glycan (N-linked (GlcNAc...) asparagine) is linked at Asn215. The region spanning 241 to 255 is the Laminin EGF-like 4; truncated domain; it reads CNCGGGPCDSVTGEC. The domain II and I stretch occupies residues 256 to 825; that stretch reads LEEGFEVPTG…AQTRSVASKI (570 aa). Asn308, Asn333, Asn458, Asn550, Asn571, Asn574, Asn631, and Asn639 each carry an N-linked (GlcNAc...) asparagine glycan. The stretch at 431 to 523 forms a coiled coil; sequence THRELVDEEA…ERVKEQMEVV (93 aa). Positions 556–604 form a coiled coil; sequence AEIDGAKNELQGKLSNLSNLSHDLVQEATDHAYNLQQEADELSRNLHSS. A coiled-coil region spans residues 655-717; sequence IIYHKDESDN…AVKQLQAAER (63 aa). The Cell attachment site motif lies at 717–719; that stretch reads RGD. 5 N-linked (GlcNAc...) asparagine glycosylation sites follow: Asn735, Asn751, Asn754, Asn780, and Asn803. Positions 770 to 799 form a coiled coil; that stretch reads AVDSARDAVRNLTEVVPQLLDQLRTVEQKR. 3 Laminin G-like domains span residues 826–1030, 1042–1222, and 1229–1397; these read QVSM…SVPC, AASY…GYGC, and SRRA…LYEC. An intrachain disulfide couples Cys1000 to Cys1030. Asn1088 is a glycosylation site (N-linked (GlcNAc...) asparagine). Cys1196 and Cys1222 form a disulfide bridge. 2 N-linked (GlcNAc...) asparagine glycosylation sites follow: Asn1283 and Asn1361. Residues Cys1365 and Cys1397 are joined by a disulfide bond. The segment covering 1409–1419 has biased composition (basic residues); the sequence is KKGKNSSKPKT. Positions 1409-1433 are disordered; the sequence is KKGKNSSKPKTNKQGEKSKDAPSWD. The span at 1421–1430 shows a compositional bias: basic and acidic residues; the sequence is KQGEKSKDAP. 2 consecutive Laminin G-like domains span residues 1462-1633 and 1640-1813; these read AYQY…VTPC and TGTY…INSC. Disulfide bonds link Cys1610/Cys1633 and Cys1785/Cys1813.

Laminin is a complex glycoprotein, consisting of three different polypeptide chains (alpha, beta, gamma), which are bound to each other by disulfide bonds into a cross-shaped molecule comprising one long and three short arms with globules at each end. Alpha-4 is a subunit of laminin-8 (laminin-411), laminin-9 (laminin-421) and laminin-14 (laminin-423). Strongly expressed in peripheral nerves, cardiac muscle, fat, dermis, lung stroma, aortic endothelium, endocardium and endothelium of blood vessels in skin and brain.

Its subcellular location is the secreted. The protein localises to the extracellular space. The protein resides in the extracellular matrix. It is found in the basement membrane. Binding to cells via a high affinity receptor, laminin is thought to mediate the attachment, migration and organization of cells into tissues during embryonic development by interacting with other extracellular matrix components. The sequence is that of Laminin subunit alpha-4 (Lama4) from Mus musculus (Mouse).